Here is a 363-residue protein sequence, read N- to C-terminus: S-adenosylmethionine:tRNA ribosyltransferase-isomerase (363 aa).

Belongs to the QueA family. In terms of assembly, monomer.

Its subcellular location is the cytoplasm. The enzyme catalyses 7-aminomethyl-7-carbaguanosine(34) in tRNA + S-adenosyl-L-methionine = epoxyqueuosine(34) in tRNA + adenine + L-methionine + 2 H(+). Its pathway is tRNA modification; tRNA-queuosine biosynthesis. Transfers and isomerizes the ribose moiety from AdoMet to the 7-aminomethyl group of 7-deazaguanine (preQ1-tRNA) to give epoxyqueuosine (oQ-tRNA). This chain is S-adenosylmethionine:tRNA ribosyltransferase-isomerase, found in Mannheimia succiniciproducens (strain KCTC 0769BP / MBEL55E).